The following is a 158-amino-acid chain: Ribosome-binding factor A (158 aa).

The segment at 114–158 (AKDAEVRQVSTGAQYAGDADPYRKPEDEDEETDGSSEKNEGPASA) is disordered. Residues 148–158 (SSEKNEGPASA) are compositionally biased toward basic and acidic residues.

This sequence belongs to the RbfA family. Monomer. Binds 30S ribosomal subunits, but not 50S ribosomal subunits or 70S ribosomes.

It is found in the cytoplasm. Its function is as follows. One of several proteins that assist in the late maturation steps of the functional core of the 30S ribosomal subunit. Associates with free 30S ribosomal subunits (but not with 30S subunits that are part of 70S ribosomes or polysomes). Required for efficient processing of 16S rRNA. May interact with the 5'-terminal helix region of 16S rRNA. The polypeptide is Ribosome-binding factor A (Streptomyces griseus subsp. griseus (strain JCM 4626 / CBS 651.72 / NBRC 13350 / KCC S-0626 / ISP 5235)).